An 81-amino-acid polypeptide reads, in one-letter code: Cytochrome b559 subunit alpha (81 aa).

The helical transmembrane segment at 21 to 35 (VIHSITIPMLFIAGW) threads the bilayer. H23 contributes to the heme binding site.

This sequence belongs to the PsbE/PsbF family. As to quaternary structure, heterodimer of an alpha subunit and a beta subunit. PSII is composed of 1 copy each of membrane proteins PsbA, PsbB, PsbC, PsbD, PsbE, PsbF, PsbH, PsbI, PsbJ, PsbK, PsbL, PsbM, PsbT, PsbX, PsbY, PsbZ, Psb30/Ycf12, peripheral proteins PsbO, CyanoQ (PsbQ), PsbU, PsbV and a large number of cofactors. It forms dimeric complexes. It depends on heme b as a cofactor.

Its subcellular location is the cellular thylakoid membrane. In terms of biological role, this b-type cytochrome is tightly associated with the reaction center of photosystem II (PSII). PSII is a light-driven water:plastoquinone oxidoreductase that uses light energy to abstract electrons from H(2)O, generating O(2) and a proton gradient subsequently used for ATP formation. It consists of a core antenna complex that captures photons, and an electron transfer chain that converts photonic excitation into a charge separation. This Rippkaea orientalis (strain PCC 8801 / RF-1) (Cyanothece sp. (strain PCC 8801)) protein is Cytochrome b559 subunit alpha.